A 245-amino-acid chain; its full sequence is MITFISKFLASKSLTLNSQKSYLYDLQQFAEIIGEEVTPNKLKLYEQSLADLKVSAKKRKISAVNQFLFFLYENEVLDRFYKIKNKEKLPLLTPAYQEVDLSVLYRKIGDSKGQLIALLIVELGLSPSEIIQLKWENIALEFQVLTIVNEKVMRILEIPQLLLPYLEGEHKAVYLFDNKGEAYSRQWLFQKLNYYLASVDLSQMTAQKLREQYIIKEKNKGTAILDLTRKLGLKSPVTLEKYFKN.

Residues 1–72 (MITFISKFLA…AVNQFLFFLY (72 aa)) form the Core-binding (CB) domain. One can recognise a Tyr recombinase domain in the interval 90–245 (PLLTPAYQEV…PVTLEKYFKN (156 aa)). Active-site residues include K151 and R210. The active-site O-(3'-phospho-DNA)-tyrosine intermediate is Y242.

The protein belongs to the 'phage' integrase family. XerD-like subfamily.

It is found in the cytoplasm. Functionally, putative tyrosine recombinase. Not involved in the cutting and rejoining of the recombining DNA molecules on dif(SL) site. In Streptococcus mutans serotype c (strain ATCC 700610 / UA159), this protein is Tyrosine recombinase XerD-like.